A 275-amino-acid chain; its full sequence is Probable ribosomal RNA small subunit methyltransferase A (275 aa).

5 residues coordinate S-adenosyl-L-methionine: Leu-13, Gly-38, Glu-59, Asp-84, and Asn-101.

It belongs to the class I-like SAM-binding methyltransferase superfamily. rRNA adenine N(6)-methyltransferase family. RsmA subfamily.

The protein localises to the cytoplasm. In terms of biological role, specifically dimethylates two adjacent adenosines in the loop of a conserved hairpin near the 3'-end of 16S rRNA in the 30S particle. May play a critical role in biogenesis of 30S subunits. In Methanocaldococcus jannaschii (strain ATCC 43067 / DSM 2661 / JAL-1 / JCM 10045 / NBRC 100440) (Methanococcus jannaschii), this protein is Probable ribosomal RNA small subunit methyltransferase A.